A 601-amino-acid polypeptide reads, in one-letter code: Probable translation initiation factor IF-2 (601 aa).

One can recognise a tr-type G domain in the interval 14–229 (LRTPIVAVLG…VMMGLSQRYM (216 aa)). Residues 23-30 (GHVDHGKT) form a G1 region. A GTP-binding site is contributed by 23–30 (GHVDHGKT). A G2 region spans residues 48 to 52 (AITQH). Residues 85–88 (DTPG) form a G3 region. GTP-binding positions include 85 to 89 (DTPGH) and 139 to 142 (NKID). Positions 139–142 (NKID) are G4. Positions 207 to 209 (SAE) are G5.

This sequence belongs to the TRAFAC class translation factor GTPase superfamily. Classic translation factor GTPase family. IF-2 subfamily.

Functionally, function in general translation initiation by promoting the binding of the formylmethionine-tRNA to ribosomes. Seems to function along with eIF-2. The sequence is that of Probable translation initiation factor IF-2 from Haloarcula marismortui (strain ATCC 43049 / DSM 3752 / JCM 8966 / VKM B-1809) (Halobacterium marismortui).